A 309-amino-acid polypeptide reads, in one-letter code: GATA transcription factor 25 (309 aa).

The tract at residues 1 to 35 (MFGRHSIIPNNQIGTASASAGEDHVSASATSGHIP) is disordered. The span at 8 to 18 (IPNNQIGTASA) shows a compositional bias: polar residues. Residues 77-112 (PPEGANQLTISFRGQVYVFDAVGADKVDAVLSLLGG) enclose the Tify domain. Positions 146–188 (RAQSLDRFRKKRNARCFEKKVRYGVRQEVALRMARNKGQFTSS) constitute a CCT domain. The segment covering 187 to 202 (SSKMTDGAYNSGTDQD) has biased composition (polar residues). A disordered region spans residues 187-207 (SSKMTDGAYNSGTDQDSAQDD). Residues 208–267 (AHPEISCTHCGISSKCTPMMRRGPSGPRTLCNACGLFWANRGTLRDLSKKTEENQLALMK) form a GATA-type zinc finger. The segment at 290–309 (EHTSMVSLANGDNSNLLGDH) is disordered. A compositionally biased stretch (polar residues) spans 293–309 (SMVSLANGDNSNLLGDH).

Belongs to the type IV zinc-finger family. Class C subfamily. Predominantly expressed in shoot apices, inflorescences and roots.

It is found in the nucleus. Functionally, transcriptional activator that specifically binds 5'-GATA-3' or 5'-GAT-3' motifs within gene promoters. The protein is GATA transcription factor 25 (GATA25) of Arabidopsis thaliana (Mouse-ear cress).